Reading from the N-terminus, the 497-residue chain is FAD-linked oxidoreductase fogF (497 aa).

An N-terminal signal peptide occupies residues 1–18 (MRRNILTALACSWLTAHA). Residues 59–229 (NAPTYAGAIS…TSATYKLHKL (171 aa)) enclose the FAD-binding PCMH-type domain.

It belongs to the oxygen-dependent FAD-linked oxidoreductase family. Requires FAD as cofactor.

Its pathway is secondary metabolite biosynthesis. FAD-linked oxidoreductase; part of the gene cluster that mediates the biosynthesis of flavoglaucin and congeners (including aspergin, dihydroauroglaucin and auroglaucin), prenylated salicylaldehyde derivatives carrying a saturated or an unsaturated C-7 side chain. The PKS fogA releases the carboxylic acid (8E,10E,12E)-3,5,7-trihydroxytetradeca-8,10,12-trienoic acid as its product, as well as derivatives with one and two double bonds. FogA is indeed able to reduce the initial triketide, thus being at least partially responsible for the differently saturated heptyl side chains of flavoglaucin congeners. The oxidoreductases fogB, fogC and fogD modify the nascent polyketide in fogA-bound form and, together, fogA, fogB, fogC and fogD are necessary for the formation of the aromatic core and the cyclized PKS products are released as salicyl alcohols. In particular, fogB is responsible for oxidation of a hydroxyl group or reduction of remaining double bond(s) at the C-7 residue whereas fogD is probably involved in the reductive release of the modified PKS products. The cytochrome P450 monooxygenase fogE is then responsible for the hydroxylation at C-3 of the benzene ring. The fogE products are substrates of the prenyltransferase fogH and the prenylated benzyl alcohols are subsequently oxidized by the fogF to produce the final aryl aldehydes flavoglaucin and congeners. The short-chain dehydrogenase fogG does not seem to be involved in the biosynthesis of the prenylated salicylaldehyde derivatives. This chain is FAD-linked oxidoreductase fogF, found in Aspergillus ruber (strain CBS 135680).